We begin with the raw amino-acid sequence, 72 residues long: Translation initiation factor IF-1 (72 aa).

One can recognise an S1-like domain in the interval 1-72; that stretch reads MSKEEVLEFS…TKGRIIYRYK (72 aa).

This sequence belongs to the IF-1 family. Component of the 30S ribosomal translation pre-initiation complex which assembles on the 30S ribosome in the order IF-2 and IF-3, IF-1 and N-formylmethionyl-tRNA(fMet); mRNA recruitment can occur at any time during PIC assembly.

The protein localises to the cytoplasm. Its function is as follows. One of the essential components for the initiation of protein synthesis. Stabilizes the binding of IF-2 and IF-3 on the 30S subunit to which N-formylmethionyl-tRNA(fMet) subsequently binds. Helps modulate mRNA selection, yielding the 30S pre-initiation complex (PIC). Upon addition of the 50S ribosomal subunit IF-1, IF-2 and IF-3 are released leaving the mature 70S translation initiation complex. The sequence is that of Translation initiation factor IF-1 from Bartonella henselae (strain ATCC 49882 / DSM 28221 / CCUG 30454 / Houston 1) (Rochalimaea henselae).